The primary structure comprises 319 residues: Acetyl-coenzyme A carboxylase carboxyl transferase subunit alpha (319 aa).

The CoA carboxyltransferase C-terminal domain maps to 35 to 296 (NLDEEVQRLR…KAQLLADLLD (262 aa)).

It belongs to the AccA family. Acetyl-CoA carboxylase is a heterohexamer composed of biotin carboxyl carrier protein (AccB), biotin carboxylase (AccC) and two subunits each of ACCase subunit alpha (AccA) and ACCase subunit beta (AccD).

The protein resides in the cytoplasm. The enzyme catalyses N(6)-carboxybiotinyl-L-lysyl-[protein] + acetyl-CoA = N(6)-biotinyl-L-lysyl-[protein] + malonyl-CoA. It functions in the pathway lipid metabolism; malonyl-CoA biosynthesis; malonyl-CoA from acetyl-CoA: step 1/1. Component of the acetyl coenzyme A carboxylase (ACC) complex. First, biotin carboxylase catalyzes the carboxylation of biotin on its carrier protein (BCCP) and then the CO(2) group is transferred by the carboxyltransferase to acetyl-CoA to form malonyl-CoA. This chain is Acetyl-coenzyme A carboxylase carboxyl transferase subunit alpha, found in Pectobacterium atrosepticum (strain SCRI 1043 / ATCC BAA-672) (Erwinia carotovora subsp. atroseptica).